The following is a 636-amino-acid chain: Zinc finger protein 90 (636 aa).

Residues 14–85 (VTFKDVAVNF…EKEIQRPFCP (72 aa)) form the KRAB domain. C2H2-type zinc fingers lie at residues 208 to 230 (YKCD…EKIH), 250 to 272 (HECA…QRIH), 278 to 300 (FECN…ENAH), 306 to 328 (YQCS…QRIH), 334 to 356 (YRCN…EVTH), 362 to 384 (FQCK…ERTH), and 390 to 412 (FECS…MRIH). The disordered stretch occupies residues 227–247 (EKIHKGDPYSNGTDQGAQSGR). A Glycyl lysine isopeptide (Lys-Gly) (interchain with G-Cter in SUMO2) cross-link involves residue K444. C2H2-type zinc fingers lie at residues 446–468 (YHCN…QRLH), 494–516 (YQCN…HRIH), 522–544 (YECN…ERTH), 550–572 (YECI…ERTH), 578–600 (YECN…QRTH), and 606–628 (YACK…HRVH).

This sequence belongs to the krueppel C2H2-type zinc-finger protein family. In terms of assembly, interacts (via N- and C-termini) with REST (via zinc-finger DNA-binding domain); the interaction inhibits REST repressor activity. As to expression, brain, spleen, thymus, and testis. Expressed in heart.

The protein resides in the nucleus. In terms of biological role, inhibits the transcriptional repressor activity of REST by inhibiting its binding to DNA, thereby derepressing transcription of REST target genes. In Mus musculus (Mouse), this protein is Zinc finger protein 90 (Zfp90).